Here is a 382-residue protein sequence, read N- to C-terminus: Type 2 DNA topoisomerase 6 subunit A (382 aa).

Positions Tyr-14–Tyr-155 constitute a Topo IIA-type catalytic domain. The active-site O-(5'-phospho-DNA)-tyrosine intermediate is Tyr-108. Positions 202 and 254 each coordinate Mg(2+).

This sequence belongs to the TOP6A family. In terms of assembly, homodimer. Heterotetramer of two Top6A and two Top6B chains. Requires Mg(2+) as cofactor.

It catalyses the reaction ATP-dependent breakage, passage and rejoining of double-stranded DNA.. In terms of biological role, relaxes both positive and negative superturns and exhibits a strong decatenase activity. In Pyrococcus horikoshii (strain ATCC 700860 / DSM 12428 / JCM 9974 / NBRC 100139 / OT-3), this protein is Type 2 DNA topoisomerase 6 subunit A.